The following is a 482-amino-acid chain: DNA polymerase II small subunit (482 aa).

Belongs to the DNA polymerase delta/II small subunit family. In terms of assembly, heterodimer of a large subunit and a small subunit.

It catalyses the reaction DNA(n) + a 2'-deoxyribonucleoside 5'-triphosphate = DNA(n+1) + diphosphate. The catalysed reaction is Exonucleolytic cleavage in the 3'- to 5'-direction to yield nucleoside 5'-phosphates.. Its function is as follows. Possesses two activities: a DNA synthesis (polymerase) and an exonucleolytic activity that degrades single-stranded DNA in the 3' to 5' direction. Has a template-primer preference which is characteristic of a replicative DNA polymerase. The sequence is that of DNA polymerase II small subunit (polB) from Methanothermobacter thermautotrophicus (strain ATCC 29096 / DSM 1053 / JCM 10044 / NBRC 100330 / Delta H) (Methanobacterium thermoautotrophicum).